Reading from the N-terminus, the 936-residue chain is Protein translocase subunit SecA (936 aa).

ATP is bound by residues Q90, 108–112 (GEGKT), and D499.

The protein belongs to the SecA family. As to quaternary structure, monomer and homodimer. Part of the essential Sec protein translocation apparatus which comprises SecA, SecYEG and auxiliary proteins SecDF. Other proteins may also be involved.

It is found in the cell inner membrane. Its subcellular location is the cellular thylakoid membrane. The protein localises to the cytoplasm. It carries out the reaction ATP + H2O + cellular proteinSide 1 = ADP + phosphate + cellular proteinSide 2.. Functionally, part of the Sec protein translocase complex. Interacts with the SecYEG preprotein conducting channel. Has a central role in coupling the hydrolysis of ATP to the transfer of proteins into and across the cell membrane, serving as an ATP-driven molecular motor driving the stepwise translocation of polypeptide chains across the membrane. Probably participates in protein translocation into and across both the cytoplasmic and thylakoid membranes in cyanobacterial cells. This is Protein translocase subunit SecA from Trichodesmium erythraeum (strain IMS101).